A 180-amino-acid polypeptide reads, in one-letter code: Ribosome rescue factor SmrB (180 aa).

The region spanning 98 to 173 is the Smr domain; the sequence is LDLHGLTQLQ…GNAALLVLVA (76 aa).

It belongs to the SmrB family. As to quaternary structure, associates with collided ribosomes, but not with correctly translating polysomes.

Acts as a ribosome collision sensor. Detects stalled/collided disomes (pairs of ribosomes where the leading ribosome is stalled and a second ribosome has collided with it) and endonucleolytically cleaves mRNA at the 5' boundary of the stalled ribosome. Stalled/collided disomes form a new interface (primarily via the 30S subunits) that binds SmrB. Cleaved mRNA becomes available for tmRNA ligation, leading to ribosomal subunit dissociation and rescue of stalled ribosomes. In Pectobacterium atrosepticum (strain SCRI 1043 / ATCC BAA-672) (Erwinia carotovora subsp. atroseptica), this protein is Ribosome rescue factor SmrB.